Reading from the N-terminus, the 332-residue chain is Large ribosomal subunit protein mL44 (332 aa).

The transit peptide at 1–30 (MASGLVRLLQQGPRCLLAPVAPKLVPPVRG) directs the protein to the mitochondrion. Positions 86-228 (DLLKTAFVNS…LITQMTGKEL (143 aa)) constitute an RNase III domain. The DRBM domain occupies 236 to 306 (NPMGLLVEEL…ARVALRKLYG (71 aa)).

Belongs to the ribonuclease III family. Mitochondrion-specific ribosomal protein mL44 subfamily. Component of the mitochondrial ribosome large subunit (39S) which comprises a 16S rRNA and about 50 distinct proteins.

The protein resides in the mitochondrion. In terms of biological role, component of the 39S subunit of mitochondrial ribosome. May have a function in the assembly/stability of nascent mitochondrial polypeptides exiting the ribosome. In Pongo abelii (Sumatran orangutan), this protein is Large ribosomal subunit protein mL44 (MRPL44).